Consider the following 235-residue polypeptide: MDARERLIVGLDVPTIGEAEKLVSTLGDDILFYKIGYQLVFAGGLEFARDLAASGKKIFLDMKLLDIDNTVASGVENIAKMGMSMLTLHAYPKAMKAAVEAAAGSGLCLLGVTVLTSMDAEDLADAGYSQDPHSLVLRRAGQARAAGMGGIVCSAAEAAEVREIVGPDMAIVTPGIRPTGSDHGDQKRVMTPFDALKAGATHLVVARPIVKAPDPRDAARAVLNEMVGALWPANR.

Residues Asp12, Lys34, 61-70 (DMKLLDIDNT), Thr116, Arg177, Gln186, and Arg207 contribute to the substrate site. The active-site Proton donor is the Lys63.

Belongs to the OMP decarboxylase family. Type 1 subfamily. In terms of assembly, homodimer.

The enzyme catalyses orotidine 5'-phosphate + H(+) = UMP + CO2. The protein operates within pyrimidine metabolism; UMP biosynthesis via de novo pathway; UMP from orotate: step 2/2. Its function is as follows. Catalyzes the decarboxylation of orotidine 5'-monophosphate (OMP) to uridine 5'-monophosphate (UMP). The chain is Orotidine 5'-phosphate decarboxylase from Rhizobium leguminosarum bv. trifolii (strain WSM2304).